The following is a 630-amino-acid chain: 1-deoxy-D-xylulose-5-phosphate synthase (630 aa).

Residues His72 and 113–115 contribute to the thiamine diphosphate site; that span reads GHS. A Mg(2+)-binding site is contributed by Asp144. Residues 145 to 146, Asn173, Tyr284, and Glu367 contribute to the thiamine diphosphate site; that span reads GA. Asn173 provides a ligand contact to Mg(2+).

This sequence belongs to the transketolase family. DXPS subfamily. Homodimer. Mg(2+) serves as cofactor. Thiamine diphosphate is required as a cofactor.

The enzyme catalyses D-glyceraldehyde 3-phosphate + pyruvate + H(+) = 1-deoxy-D-xylulose 5-phosphate + CO2. The protein operates within metabolic intermediate biosynthesis; 1-deoxy-D-xylulose 5-phosphate biosynthesis; 1-deoxy-D-xylulose 5-phosphate from D-glyceraldehyde 3-phosphate and pyruvate: step 1/1. Functionally, catalyzes the acyloin condensation reaction between C atoms 2 and 3 of pyruvate and glyceraldehyde 3-phosphate to yield 1-deoxy-D-xylulose-5-phosphate (DXP). This Bacillus cereus (strain AH820) protein is 1-deoxy-D-xylulose-5-phosphate synthase.